The chain runs to 541 residues: tRNA uridine(34) acetyltransferase (541 aa).

The segment at 76–336 is radical S-adenosyl-L-methionine (rSAM); sequence KPVRTISGVA…GEYKPYREEE (261 aa). The Radical SAM core domain maps to 79-350; sequence RTISGVAVVA…ISYAKSIMPK (272 aa). [4Fe-4S] cluster is bound by residues Cys-96, Cys-101, and Cys-104. Residues Lys-156, 467-470, 491-493, and Tyr-524 each bind acetyl-CoA; these read QLHV and YGR. An N-acetyltransferase domain is found at 401 to 541; that stretch reads VMYKKGIMPD…VGAYMGKYLE (141 aa).

This sequence belongs to the ELP3 family. [4Fe-4S] cluster serves as cofactor.

It catalyses the reaction uridine(34) in tRNA + acetyl-CoA + S-adenosyl-L-methionine + H2O = 5-(carboxymethyl)uridine(34) in tRNA + 5'-deoxyadenosine + L-methionine + CoA + 2 H(+). It functions in the pathway tRNA modification. TRNA uridine(34) acetyltransferase, which mediates formation of carboxymethyluridine in the wobble base at position 34 in tRNAs. The proposed mechanism is the following: (i) recruits S-adenosyl-L-methionine and cleaves it to generate a 5'-deoxyadenosine radical (5'-dA) in the radical S-adenosyl-L-methionine (rSAM) region, (ii) hydrolyzes acetyl-CoA in the N-acetyltransferase domain and (iii) an acetyl radical is formed by the products of the two domains and (iv) is transferred onto the C5 position of uridine(34) in the bound tRNA molecule. Does not show protein lysine acetyltransferase activity. The sequence is that of tRNA uridine(34) acetyltransferase from Methanocaldococcus jannaschii (strain ATCC 43067 / DSM 2661 / JAL-1 / JCM 10045 / NBRC 100440) (Methanococcus jannaschii).